The following is a 182-amino-acid chain: Ribosome-recycling factor (182 aa).

Belongs to the RRF family.

It is found in the cytoplasm. In terms of biological role, responsible for the release of ribosomes from messenger RNA at the termination of protein biosynthesis. May increase the efficiency of translation by recycling ribosomes from one round of translation to another. The sequence is that of Ribosome-recycling factor from Picosynechococcus sp. (strain ATCC 27264 / PCC 7002 / PR-6) (Agmenellum quadruplicatum).